We begin with the raw amino-acid sequence, 655 residues long: DNA topoisomerase 4 subunit B (655 aa).

ATP is bound by residues Tyr-9, Asn-49, Asp-76, 116 to 122, and Lys-340; that span reads GLHGVGA. Residues 387-397 show a composition bias toward basic and acidic residues; the sequence is AARKAREEARS. The disordered stretch occupies residues 387 to 419; the sequence is AARKAREEARSGKKRKKSEATLSGKLTPAGSRN. The region spanning 423–537 is the Toprim domain; it reads NELYLVEGDS…HGKVFIALPP (115 aa). 3 residues coordinate Mg(2+): Glu-429, Asp-502, and Asp-504.

It belongs to the type II topoisomerase family. ParE type 2 subfamily. In terms of assembly, heterotetramer composed of ParC and ParE. Mg(2+) is required as a cofactor. It depends on Mn(2+) as a cofactor. Requires Ca(2+) as cofactor.

It catalyses the reaction ATP-dependent breakage, passage and rejoining of double-stranded DNA.. Topoisomerase IV is essential for chromosome segregation. It relaxes supercoiled DNA. Performs the decatenation events required during the replication of a circular DNA molecule. This is DNA topoisomerase 4 subunit B from Bacillus subtilis (strain 168).